The primary structure comprises 286 residues: uncharacterized protein (286 aa).

The first 19 residues, 1–19 (MISKEYISLLSALLTKGYS), serve as a signal peptide directing secretion.

This is an uncharacterized protein from Acidianus filamentous virus 2 (isolate Italy/Pozzuoli) (AFV-2).